The sequence spans 674 residues: L-type lectin-domain containing receptor kinase SIT1 (674 aa).

A signal peptide spans Met-1–Ala-27. Over Ala-28–Lys-301 the chain is Extracellular. Residues Asp-31–Gly-275 are legume-lectin like. Asn-42, Asn-61, Asn-143, Asn-196, Asn-219, Asn-240, and Asn-281 each carry an N-linked (GlcNAc...) asparagine glycan. A helical transmembrane segment spans residues Ile-302–Ile-322. Over His-323 to Arg-674 the chain is Cytoplasmic. Positions Phe-357 to Leu-636 constitute a Protein kinase domain. ATP-binding positions include Leu-363–Val-371 and Lys-386. The active-site Proton acceptor is the Asp-482. Residues Thr-511, Thr-515, Thr-516, and Thr-521 each carry the phosphothreonine modification.

This sequence in the C-terminal section; belongs to the protein kinase superfamily. Ser/Thr protein kinase family. It in the N-terminal section; belongs to the leguminous lectin family. As to quaternary structure, interacts with B'KAPPA. In terms of processing, autophosphorylated at Thr-511, Thr-515 or Thr-516, and Thr-521 in response to salt stress. Dephosphorylated by phosphatase 2A in response to salt stress. As to expression, expressed in root epidermal cells.

The protein resides in the cell membrane. It carries out the reaction L-seryl-[protein] + ATP = O-phospho-L-seryl-[protein] + ADP + H(+). The catalysed reaction is L-threonyl-[protein] + ATP = O-phospho-L-threonyl-[protein] + ADP + H(+). With respect to regulation, activated by autophosphorylation in response to salt stress. Lectin-domain containing receptor kinase involved in salt stress response. Acts as a negative regulator of salt tolerance. Mediates salt sensitivity by phosphorylating and activating MPK3 and MPK6. Promotes ethylene production and mediates salt-induced ethylene signaling. Promotes the accumulation of reactive oxygen species (ROS) under salt stress conditions. Its kinase activity is triggered by salt stress and is required for its function in salt stress response. Phosphorylates B'KAPPA, a B regulatory subunit of phosphatase 2A (PP2A). In Oryza sativa subsp. japonica (Rice), this protein is L-type lectin-domain containing receptor kinase SIT1.